A 164-amino-acid polypeptide reads, in one-letter code: Endoribonuclease YbeY (164 aa).

Zn(2+)-binding residues include histidine 125, histidine 129, and histidine 135.

It belongs to the endoribonuclease YbeY family. Zn(2+) is required as a cofactor.

Its subcellular location is the cytoplasm. Its function is as follows. Single strand-specific metallo-endoribonuclease involved in late-stage 70S ribosome quality control and in maturation of the 3' terminus of the 16S rRNA. The chain is Endoribonuclease YbeY from Paramagnetospirillum magneticum (strain ATCC 700264 / AMB-1) (Magnetospirillum magneticum).